The sequence spans 1035 residues: FERM domain-containing protein 4B (1035 aa).

The FERM domain maps to 59–361 (RHCQVHLLDD…SQHQFYLDRK (303 aa)). Residue S372 is modified to Phosphoserine. Coiled coils occupy residues 414-451 (QDSE…LKKI) and 535-559 (KQDY…RIRC). Residues 542–972 (VKRLQEIENS…TQLTIGLSEY (431 aa)) are necessary for adherens junction and tight junction localization. Disordered stretches follow at residues 563 to 615 (PSQK…ILPP), 631 to 699 (NEQF…LESQ), 713 to 738 (FTLS…SQSS), and 754 to 798 (TQTL…SKGQ). Positions 571 to 590 (PPEDIIPSESSSLSDTTTYD) are enriched in low complexity. Positions 594–607 (DSFTLAGQRPSSVP) are enriched in polar residues. The residue at position 609 (S609) is a Phosphoserine. The segment covering 635-644 (MDTRHSREML) has biased composition (basic and acidic residues). Polar residues-rich tracts occupy residues 664-699 (MPTT…LESQ) and 715-725 (LSKSQRSSSTE). Position 698 is a phosphoserine (S698). A compositionally biased stretch (basic residues) spans 762-771 (RGRRRSKKHS). The segment covering 772-782 (VSTSNSGSMPN) has biased composition (polar residues). A Glycyl lysine isopeptide (Lys-Gly) (interchain with G-Cter in SUMO2) cross-link involves residue K883. 3 disordered regions span residues 906–926 (RASG…SDRG), 939–958 (PCSP…TNAS), and 994–1035 (PSRQ…GTLV). Positions 907-921 (ASGQKDQGHSPQTSF) are enriched in polar residues. S916 carries the phosphoserine modification. A compositionally biased stretch (low complexity) spans 941–958 (SPSSRASSYSSVSSTNAS). Over residues 1019–1035 (SEQRLFWHEDSKPGTLV) the composition is skewed to basic and acidic residues. K1030 participates in a covalent cross-link: Glycyl lysine isopeptide (Lys-Gly) (interchain with G-Cter in SUMO2).

In terms of assembly, interacts with CYTH3. Interacts with PARD3. Interacts with CYTH1. In terms of tissue distribution, isoform 1 is expressed in the brain. Isoform 2 is expressed in the lung (at protein level).

The protein resides in the cytoplasm. It is found in the cytoskeleton. It localises to the cell junction. The protein localises to the tight junction. Its subcellular location is the adherens junction. Member of GRP1 signaling complexes that are acutely recruited to plasma membrane ruffles in response to insulin receptor signaling. May function as a scaffolding protein that regulates epithelial cell polarity by connecting ARF6 activation with the PAR3 complex. Plays a redundant role with FRMD4A in epithelial polarization. In Mus musculus (Mouse), this protein is FERM domain-containing protein 4B (Frmd4b).